Here is a 118-residue protein sequence, read N- to C-terminus: Thioredoxin H5 (118 aa).

An N-acetylalanine modification is found at A2. The 112-residue stretch at 2 to 113 (AGEGEVIACH…INEKLMKHGG (112 aa)) folds into the Thioredoxin domain. Residues C39 and C42 each act as nucleophile in the active site. C39 and C42 are oxidised to a cystine.

This sequence belongs to the thioredoxin family. Plant H-type subfamily. In terms of assembly, interacts with MDH1.

It is found in the cytoplasm. In terms of biological role, thiol-disulfide oxidoreductase involved in response to pathogens and oxidative stresses. Required for the response to victorin, a phytotoxin which induces programmed cell death in sensitive plants. Possesses insulin disulfide bonds reducing activity. The chain is Thioredoxin H5 (TRX5) from Arabidopsis thaliana (Mouse-ear cress).